Here is a 335-residue protein sequence, read N- to C-terminus: MRVLGIETSCDETGVAVFDSKQGLLADILHSQAKLHAGYGGVVPELASRDHIRKLLPLLRKVLNQAGLNKEDIDGVAYTGGPGLIGALLVGAAVGRSLAWALGKPAIAVHHMEGHLLSPLLEPNPPGFPFCALLISGGHTMLVTVNRIGAYRILGESLDDAVGEAFDKTAKLLQLGYPGGPALAKLAEQGNPDRFYFPRPMLDRPGLNFSFSGLKTYALNTLHKNGSEAAADIARAFQDAVVDTLTVKCRRALQQTGLNRLVVAGGVSANQALRQRLKAMGTQENVQVYYPRLAFCTDNGAMIAFAGCQRLLAGEQTSSGFSVRARWPLDTLPEI.

H111 and H115 together coordinate Fe cation. Substrate contacts are provided by residues 134–138 (LISGG), D167, G180, and N270. D298 lines the Fe cation pocket.

The protein belongs to the KAE1 / TsaD family. Requires Fe(2+) as cofactor.

Its subcellular location is the cytoplasm. It catalyses the reaction L-threonylcarbamoyladenylate + adenosine(37) in tRNA = N(6)-L-threonylcarbamoyladenosine(37) in tRNA + AMP + H(+). Functionally, required for the formation of a threonylcarbamoyl group on adenosine at position 37 (t(6)A37) in tRNAs that read codons beginning with adenine. Is involved in the transfer of the threonylcarbamoyl moiety of threonylcarbamoyl-AMP (TC-AMP) to the N6 group of A37, together with TsaE and TsaB. TsaD likely plays a direct catalytic role in this reaction. The protein is tRNA N6-adenosine threonylcarbamoyltransferase of Nitrosococcus oceani (strain ATCC 19707 / BCRC 17464 / JCM 30415 / NCIMB 11848 / C-107).